The primary structure comprises 244 residues: Acetylglutamate kinase (244 aa).

Residues 40 to 41 (GG), R62, and N155 each bind substrate.

This sequence belongs to the acetylglutamate kinase family. ArgB subfamily.

The protein resides in the cytoplasm. The catalysed reaction is N-acetyl-L-glutamate + ATP = N-acetyl-L-glutamyl 5-phosphate + ADP. It functions in the pathway amino-acid biosynthesis; L-arginine biosynthesis; N(2)-acetyl-L-ornithine from L-glutamate: step 2/4. Functionally, catalyzes the ATP-dependent phosphorylation of N-acetyl-L-glutamate. The chain is Acetylglutamate kinase from Leuconostoc mesenteroides subsp. mesenteroides (strain ATCC 8293 / DSM 20343 / BCRC 11652 / CCM 1803 / JCM 6124 / NCDO 523 / NBRC 100496 / NCIMB 8023 / NCTC 12954 / NRRL B-1118 / 37Y).